Here is a 55-residue protein sequence, read N- to C-terminus: uncharacterized protein (55 aa).

The helical transmembrane segment at 7–24 (VALVGAVLATLTACTGHI) threads the bilayer.

It is found in the membrane. This is an uncharacterized protein from Escherichia coli O157:H7.